Consider the following 137-residue polypeptide: Small ribosomal subunit protein bS6 (137 aa).

The tract at residues 99–137 (LSPMKAAESREDRRSGGDDRPRRSADSEERQSASQDEEE) is disordered. Residues 105 to 129 (AESREDRRSGGDDRPRRSADSEERQ) show a composition bias toward basic and acidic residues.

It belongs to the bacterial ribosomal protein bS6 family.

Its function is as follows. Binds together with bS18 to 16S ribosomal RNA. The protein is Small ribosomal subunit protein bS6 of Marinobacter nauticus (strain ATCC 700491 / DSM 11845 / VT8) (Marinobacter aquaeolei).